A 265-amino-acid chain; its full sequence is tRNA pseudouridine synthase A (265 aa).

Catalysis depends on Asp53, which acts as the Nucleophile. Tyr111 contacts substrate.

This sequence belongs to the tRNA pseudouridine synthase TruA family. As to quaternary structure, homodimer.

It carries out the reaction uridine(38/39/40) in tRNA = pseudouridine(38/39/40) in tRNA. Formation of pseudouridine at positions 38, 39 and 40 in the anticodon stem and loop of transfer RNAs. In Acinetobacter baumannii (strain SDF), this protein is tRNA pseudouridine synthase A.